A 205-amino-acid polypeptide reads, in one-letter code: Molybdenum cofactor guanylyltransferase (205 aa).

GTP is bound by residues 14–16 (LAG), Lys-27, Asp-77, and Asp-107. Mg(2+) is bound at residue Asp-107.

The protein belongs to the MobA family. In terms of assembly, monomer. It depends on Mg(2+) as a cofactor.

The protein resides in the cytoplasm. The enzyme catalyses Mo-molybdopterin + GTP + H(+) = Mo-molybdopterin guanine dinucleotide + diphosphate. In terms of biological role, transfers a GMP moiety from GTP to Mo-molybdopterin (Mo-MPT) cofactor (Moco or molybdenum cofactor) to form Mo-molybdopterin guanine dinucleotide (Mo-MGD) cofactor. The chain is Molybdenum cofactor guanylyltransferase from Burkholderia orbicola (strain MC0-3).